The chain runs to 413 residues: L-methionine gamma-lyase (413 aa).

Pyridoxal 5'-phosphate-binding positions include Tyr-75–Arg-77 and Gly-105–Met-106. Substrate is bound at residue Tyr-131. Ser-218–Thr-220 is a binding site for pyridoxal 5'-phosphate. Residue Lys-221 is modified to N6-(pyridoxal phosphate)lysine. Position 365 (Arg-365) interacts with substrate. Positions Arg-388 to Arg-413 are disordered.

It belongs to the trans-sulfuration enzymes family. In terms of assembly, homotetramer; dimer of active dimers. The cofactor is pyridoxal 5'-phosphate.

It carries out the reaction L-methionine + H2O = methanethiol + 2-oxobutanoate + NH4(+). The enzyme catalyses L-homocysteine + H2O = 2-oxobutanoate + hydrogen sulfide + NH4(+) + H(+). It catalyses the reaction L-cysteine + H2O = hydrogen sulfide + pyruvate + NH4(+) + H(+). Catalyzes the alpha,gamma-elimination of L-methionine to produce methanethiol, 2-oxobutanoate and ammonia. Is probably involved in L-methionine catabolism. Is also able to catalyze the alpha,gamma-elimination of L-homocysteine, and, to a lesser extent, the alpha,beta-elimination of L-cysteine. The polypeptide is L-methionine gamma-lyase (Streptomyces avermitilis (strain ATCC 31267 / DSM 46492 / JCM 5070 / NBRC 14893 / NCIMB 12804 / NRRL 8165 / MA-4680)).